The primary structure comprises 389 residues: MANLHALRREQRAQGPATIMAIGTATPPNLYEQSTFPDFYFRVTNSDDKQELKKKFRRMCEKTMVKKRYLHLTEEILKERPKLCSYKEASFDDRQDIVVEEIPRLAKEAAEKAIKEWGRPKSEITHLVFCSISGIDMPGADYRLATLLGLPLTVNRLMIYSQACHMGAAMLRIAKDLAENNRGARVLVVACEITVLSFRGPNEGDFEALAGQAGFGDGAGAVVVGADPLEGIEKPIYEIAAAMQETVAESQGAVGGHLRAFGWTFYFLNQLPAIIADNLGRSLERALAPLGVREWNDVFWVAHPGNWAIIDAIEAKLQLSPDKLSTARHVFTEYGNMQSATVYFVMDELRKRSAVEGRSTTGDGLQWGVLLGFGPGLSIETVVLRSMPL.

Residue C164 is part of the active site.

The protein belongs to the thiolase-like superfamily. Chalcone/stilbene synthases family. Homodimer. In terms of tissue distribution, expressed in both the leaf and rhizome, with higher expression in the rhizome.

It carries out the reaction (E)-feruloylacetyl-CoA + (E)-feruloyl-CoA + H2O = curcumin + CO2 + 2 CoA. Its pathway is secondary metabolite biosynthesis; flavonoid biosynthesis. In terms of biological role, catalyzes the synthesis of curcumin by condensing feruloyl-CoA with a diketide-CoA in the curcuminoid biosynthesis. This is Curcumin synthase 1 (CURS1) from Curcuma longa (Turmeric).